An 836-amino-acid polypeptide reads, in one-letter code: Probable serine/threonine-protein kinase dyrk1 (836 aa).

A compositionally biased stretch (low complexity) spans 99–278; that stretch reads QQQYQQQHNN…SSNNNNNNKQ (180 aa). Residues 99 to 286 are disordered; the sequence is QQQYQQQHNN…KQSKYNDGYD (188 aa). Residues 304–624 form the Protein kinase domain; that stretch reads FEIISSLGKG…PLEALQHSFF (321 aa). Residues 310–318 and Lys333 each bind ATP; that span reads LGKGSFGQV. The Proton acceptor role is filled by Asp432. Disordered stretches follow at residues 627–697, 718–767, and 785–836; these read DETS…QQQQ, TYSP…INSN, and NIYN…NNNI. The span at 630–697 shows a compositional bias: low complexity; sequence SQPPQQQSQQ…QQLQQQQQQQ (68 aa). The span at 718–728 shows a compositional bias: polar residues; sequence TYSPTTQQSNH. The span at 729-744 shows a compositional bias: basic and acidic residues; sequence KLVDQMKKASMKDKSP. The segment covering 785 to 816 has biased composition (low complexity); sequence NIYNNNNNNNNNNNNNNNNNNSNNYNNSNELS.

This sequence belongs to the protein kinase superfamily. CMGC Ser/Thr protein kinase family. MNB/DYRK subfamily.

It catalyses the reaction L-seryl-[protein] + ATP = O-phospho-L-seryl-[protein] + ADP + H(+). The catalysed reaction is L-threonyl-[protein] + ATP = O-phospho-L-threonyl-[protein] + ADP + H(+). The enzyme catalyses L-tyrosyl-[protein] + ATP = O-phospho-L-tyrosyl-[protein] + ADP + H(+). This chain is Probable serine/threonine-protein kinase dyrk1 (dyrk1), found in Dictyostelium discoideum (Social amoeba).